Here is a 105-residue protein sequence, read N- to C-terminus: ATP synthase subunit c (105 aa).

The next 3 helical transmembrane spans lie at 3-23 (FLAL…GGMD), 32-52 (SILG…IGMG), and 78-98 (VAMA…IIAI).

Belongs to the ATPase C chain family. In terms of assembly, F-type ATPases have 2 components, F(1) - the catalytic core - and F(0) - the membrane proton channel. F(1) has five subunits: alpha(3), beta(3), gamma(1), delta(1), epsilon(1). F(0) has three main subunits: a(1), b(2) and c(10-14). The alpha and beta chains form an alternating ring which encloses part of the gamma chain. F(1) is attached to F(0) by a central stalk formed by the gamma and epsilon chains, while a peripheral stalk is formed by the delta and b chains.

It localises to the cell inner membrane. Its function is as follows. F(1)F(0) ATP synthase produces ATP from ADP in the presence of a proton or sodium gradient. F-type ATPases consist of two structural domains, F(1) containing the extramembraneous catalytic core and F(0) containing the membrane proton channel, linked together by a central stalk and a peripheral stalk. During catalysis, ATP synthesis in the catalytic domain of F(1) is coupled via a rotary mechanism of the central stalk subunits to proton translocation. In terms of biological role, key component of the F(0) channel; it plays a direct role in translocation across the membrane. A homomeric c-ring of between 10-14 subunits forms the central stalk rotor element with the F(1) delta and epsilon subunits. The sequence is that of ATP synthase subunit c from Helicobacter acinonychis (strain Sheeba).